Consider the following 357-residue polypeptide: Anthranilate phosphoribosyltransferase (357 aa).

Residues glycine 91, 94–95 (GD), threonine 99, 101–104 (NIST), 119–127 (KHGNRSVSS), and serine 131 contribute to the 5-phospho-alpha-D-ribose 1-diphosphate site. Glycine 91 serves as a coordination point for anthranilate. Mg(2+) is bound at residue serine 103. Anthranilate is bound at residue asparagine 122. Arginine 177 provides a ligand contact to anthranilate. Positions 235 and 236 each coordinate Mg(2+).

Belongs to the anthranilate phosphoribosyltransferase family. As to quaternary structure, homodimer. Mg(2+) serves as cofactor.

The enzyme catalyses N-(5-phospho-beta-D-ribosyl)anthranilate + diphosphate = 5-phospho-alpha-D-ribose 1-diphosphate + anthranilate. Its pathway is amino-acid biosynthesis; L-tryptophan biosynthesis; L-tryptophan from chorismate: step 2/5. In terms of biological role, catalyzes the transfer of the phosphoribosyl group of 5-phosphorylribose-1-pyrophosphate (PRPP) to anthranilate to yield N-(5'-phosphoribosyl)-anthranilate (PRA). The chain is Anthranilate phosphoribosyltransferase from Shewanella baltica (strain OS155 / ATCC BAA-1091).